The sequence spans 313 residues: tRNA dimethylallyltransferase (313 aa).

11–18 provides a ligand contact to ATP; the sequence is GPTACGKT. 13–18 serves as a coordination point for substrate; sequence TACGKT. Interaction with substrate tRNA regions lie at residues 36–39, 160–164, and 243–248; these read DSAL, QRIER, and RCVGYR.

This sequence belongs to the IPP transferase family. In terms of assembly, monomer. It depends on Mg(2+) as a cofactor.

It catalyses the reaction adenosine(37) in tRNA + dimethylallyl diphosphate = N(6)-dimethylallyladenosine(37) in tRNA + diphosphate. Catalyzes the transfer of a dimethylallyl group onto the adenine at position 37 in tRNAs that read codons beginning with uridine, leading to the formation of N6-(dimethylallyl)adenosine (i(6)A). The protein is tRNA dimethylallyltransferase of Neisseria meningitidis serogroup C (strain 053442).